Here is a 217-residue protein sequence, read N- to C-terminus: Large ribosomal subunit protein uL3 (217 aa).

Belongs to the universal ribosomal protein uL3 family. In terms of assembly, part of the 50S ribosomal subunit. Forms a cluster with proteins L14 and L19.

In terms of biological role, one of the primary rRNA binding proteins, it binds directly near the 3'-end of the 23S rRNA, where it nucleates assembly of the 50S subunit. In Mycolicibacterium paratuberculosis (strain ATCC BAA-968 / K-10) (Mycobacterium paratuberculosis), this protein is Large ribosomal subunit protein uL3.